The following is a 149-amino-acid chain: MIKEFKEFIMRGSVLDLAVGVVIGSAFTAIVTQVVEGLITPLISLIFVLTTGKKSADDALGALVYKVEGVEFNIGSVISALITFLITAFVLFLIVKAANKMKNRGKKEEAAEEEVVPTSEDYLKEIRDLLAAQTPPAETVKTDSTFTEK.

2 helical membrane-spanning segments follow: residues 8–28 (FIMR…SAFT) and 74–94 (IGSV…LFLI).

Belongs to the MscL family. Homopentamer.

The protein localises to the cell membrane. Its function is as follows. Channel that opens in response to stretch forces in the membrane lipid bilayer. May participate in the regulation of osmotic pressure changes within the cell. The sequence is that of Large-conductance mechanosensitive channel from Enterococcus faecalis (strain ATCC 700802 / V583).